The following is a 585-amino-acid chain: Probable ubiquitin carboxyl-terminal hydrolase 9 (585 aa).

A disordered region spans residues 1 to 23 (MSLLRWMGMNSPGSTDRRKSTWE). The USP domain maps to 41 to 424 (YGLTNYGNTC…TAYVLFYTAA (384 aa)). Cys50 (nucleophile) is an active-site residue. The segment at 85-110 (CTKTNHPESSSSRHSKKKSMENRKSS) is disordered. His375 serves as the catalytic Proton acceptor. Residues 447-470 (SQLKQESVEVSNLSSTPRSNSTIT) show a composition bias toward polar residues. The segment at 447 to 473 (SQLKQESVEVSNLSSTPRSNSTITYPD) is disordered. At Ser505 the chain carries Phosphoserine. 2 disordered regions span residues 511–530 (FHSR…SRSF) and 540–585 (KFFG…RSKR). The segment covering 542 to 551 (FGSSQSNSPK) has biased composition (polar residues). Ser549 is modified (phosphoserine). Residues 553-570 (SPLRDTHKSSDEHSESKH) show a composition bias toward basic and acidic residues. Positions 574–585 (LPWQFSRSRSKR) are enriched in polar residues.

Belongs to the peptidase C19 family. In terms of assembly, interacts with bun107 and bun62.

Its subcellular location is the nucleus. The protein resides in the cytoplasm. It localises to the cell tip. The catalysed reaction is Thiol-dependent hydrolysis of ester, thioester, amide, peptide and isopeptide bonds formed by the C-terminal Gly of ubiquitin (a 76-residue protein attached to proteins as an intracellular targeting signal).. Its function is as follows. Ubiquitin C-terminal hydrolase involved in regulating actin dynamics and/or endocytosis at cell tips and septa. The chain is Probable ubiquitin carboxyl-terminal hydrolase 9 (ubp9) from Schizosaccharomyces pombe (strain 972 / ATCC 24843) (Fission yeast).